The chain runs to 314 residues: PDCD10 and GCKIII kinases-associated protein 1 (314 aa).

A Phosphoserine modification is found at serine 30. The tract at residues 36–142 (DDTDKLKGKW…TQPFLEGGGT (107 aa)) is disordered. Threonine 106 is modified (phosphothreonine). The span at 107 to 116 (PQPTGNSSPT) shows a compositional bias: polar residues. Residues serine 238 and serine 241 each carry the phosphoserine modification. The disordered stretch occupies residues 267 to 291 (VDSGNRQEDTHGSDGDGDGEIVDED). The span at 271 to 280 (NRQEDTHGSD) shows a compositional bias: basic and acidic residues. The span at 281 to 291 (GDGDGEIVDED) shows a compositional bias: acidic residues.

As to quaternary structure, interacts with KEAP1; this interaction prevents the ubiquitination of KEAP1 by TRIM25, thus protecting KEAP1 from degradation. Found in association with PDCD10 and members of the STE20 kinases, such as STK24, STK25 and STK26.

It is found in the cell membrane. Its function is as follows. Acts as a tumor suppressor. Acts as a tumor suppressor for colorectal cancer cell proliferation by targeting KEAP1/USP17/ELK1/CDK6 axis. The chain is PDCD10 and GCKIII kinases-associated protein 1 from Homo sapiens (Human).